Here is a 609-residue protein sequence, read N- to C-terminus: Meiotically up-regulated gene 28 protein (609 aa).

RRM domains lie at 20–103 (ISIY…YTHI) and 419–499 (CNLF…YAEK).

The protein resides in the cytoplasm. Has a role in sporulation. This is Meiotically up-regulated gene 28 protein (mug28) from Schizosaccharomyces pombe (strain 972 / ATCC 24843) (Fission yeast).